The chain runs to 354 residues: UDP-N-acetylglucosamine--N-acetylmuramyl-(pentapeptide) pyrophosphoryl-undecaprenol N-acetylglucosamine transferase (354 aa).

Residues 13 to 15 (SGG), Asn125, Ser189, Ile242, 261 to 266 (ALTVSE), and Gln286 contribute to the UDP-N-acetyl-alpha-D-glucosamine site.

The protein belongs to the glycosyltransferase 28 family. MurG subfamily.

The protein resides in the cell inner membrane. It carries out the reaction di-trans,octa-cis-undecaprenyl diphospho-N-acetyl-alpha-D-muramoyl-L-alanyl-D-glutamyl-meso-2,6-diaminopimeloyl-D-alanyl-D-alanine + UDP-N-acetyl-alpha-D-glucosamine = di-trans,octa-cis-undecaprenyl diphospho-[N-acetyl-alpha-D-glucosaminyl-(1-&gt;4)]-N-acetyl-alpha-D-muramoyl-L-alanyl-D-glutamyl-meso-2,6-diaminopimeloyl-D-alanyl-D-alanine + UDP + H(+). The protein operates within cell wall biogenesis; peptidoglycan biosynthesis. In terms of biological role, cell wall formation. Catalyzes the transfer of a GlcNAc subunit on undecaprenyl-pyrophosphoryl-MurNAc-pentapeptide (lipid intermediate I) to form undecaprenyl-pyrophosphoryl-MurNAc-(pentapeptide)GlcNAc (lipid intermediate II). The polypeptide is UDP-N-acetylglucosamine--N-acetylmuramyl-(pentapeptide) pyrophosphoryl-undecaprenol N-acetylglucosamine transferase (Buchnera aphidicola subsp. Acyrthosiphon pisum (strain 5A)).